Consider the following 863-residue polypeptide: Leucine--tRNA ligase (863 aa).

A 'HIGH' region motif is present at residues 42-52; that stretch reads PYPSGRLHMGH. Residues 622–626 carry the 'KMSKS' region motif; it reads KMSKS. Lysine 625 is an ATP binding site.

This sequence belongs to the class-I aminoacyl-tRNA synthetase family.

The protein localises to the cytoplasm. It catalyses the reaction tRNA(Leu) + L-leucine + ATP = L-leucyl-tRNA(Leu) + AMP + diphosphate. The chain is Leucine--tRNA ligase from Shewanella frigidimarina (strain NCIMB 400).